The following is a 572-amino-acid chain: MRTSQYLLSTLKETPADAEVISHQLMLRAGMIRKLASGLYTWLPTGLRVLKKVENIVREEMNNAGAIEVSMPVVQPAELWQESGRWEQYGPELLRFVDRGDRAFVLGPTHEEVITDLIRNELSSYKQLPLNFYQIQTKFRDEVRPRFGVMRSREFLMKDAYSFHTTQESLQQTYDAMYEAYSKIFTRMGLDFRPVQADTGSIGGSASHEFQVLAQSGEDDIVFSDTSDFAANIELAEAVAPLTPRAAATQEMTLVDTPNAKTIAELVEQFNLPIEKTVKTLLVKAAEGSEFPLVALLVRGDHELNEVKAEKLAQVASPLTFATEAEIRAAVNAGPGSLGPVNMPVPVVIDRSVAAMSDFAAGANIDGKHYFGINWDRDVATPQVADIRNVVAGDPSPDGQGTLLIKRGIEVGHIFQLGTKYSDALKASVQGEDGRNQVLTMGCYGIGVTRVVAAAIEQNHDERGIVWPDAIAPFQVAILPMNMHKSFRVQELAEKLYAELRAKGIDVLMDDRKERPGVMFADMELIGIPHTVVIGDRNLDNDEIEYKYRRDGEKKMIKTGDILDYLVANVKR.

This sequence belongs to the class-II aminoacyl-tRNA synthetase family. ProS type 1 subfamily. Homodimer.

The protein localises to the cytoplasm. The enzyme catalyses tRNA(Pro) + L-proline + ATP = L-prolyl-tRNA(Pro) + AMP + diphosphate. Its function is as follows. Catalyzes the attachment of proline to tRNA(Pro) in a two-step reaction: proline is first activated by ATP to form Pro-AMP and then transferred to the acceptor end of tRNA(Pro). As ProRS can inadvertently accommodate and process non-cognate amino acids such as alanine and cysteine, to avoid such errors it has two additional distinct editing activities against alanine. One activity is designated as 'pretransfer' editing and involves the tRNA(Pro)-independent hydrolysis of activated Ala-AMP. The other activity is designated 'posttransfer' editing and involves deacylation of mischarged Ala-tRNA(Pro). The misacylated Cys-tRNA(Pro) is not edited by ProRS. This Cronobacter sakazakii (strain ATCC BAA-894) (Enterobacter sakazakii) protein is Proline--tRNA ligase.